The sequence spans 494 residues: Probable cytochrome P450 518A1 (494 aa).

The helical transmembrane segment at 1 to 21 (MSILIILIISIIFYLIFDFLY) threads the bilayer. Position 438 (cysteine 438) interacts with heme.

This sequence belongs to the cytochrome P450 family. Heme is required as a cofactor.

It localises to the membrane. The sequence is that of Probable cytochrome P450 518A1 (cyp518A1) from Dictyostelium discoideum (Social amoeba).